Reading from the N-terminus, the 368-residue chain is Cystathionine beta-lyase (368 aa).

Lys221 carries the N6-(pyridoxal phosphate)lysine modification.

The protein belongs to the class-II pyridoxal-phosphate-dependent aminotransferase family. MalY/PatB cystathionine beta-lyase subfamily. Pyridoxal 5'-phosphate is required as a cofactor.

It carries out the reaction L,L-cystathionine + H2O = L-homocysteine + pyruvate + NH4(+). It catalyses the reaction an S-substituted L-cysteine + H2O = a thiol + pyruvate + NH4(+). It functions in the pathway amino-acid biosynthesis; L-methionine biosynthesis via de novo pathway; L-homocysteine from L-cystathionine: step 1/1. Catalyzes the transformation of cystathionine to homocysteine. The sequence is that of Cystathionine beta-lyase (metC) from Corynebacterium glutamicum (Brevibacterium saccharolyticum).